The following is a 284-amino-acid chain: Deoxyribonuclease-1 (284 aa).

Positions 1-22 are cleaved as a signal peptide; that stretch reads MRGARLMGALLALAGLLQGALA. Asn40 is a glycosylation site (N-linked (GlcNAc...) asparagine). Glu100 is an active-site residue. Cys123 and Cys126 are oxidised to a cystine. The N-linked (GlcNAc...) asparagine glycan is linked to Asn128. The active site involves His156. An intrachain disulfide couples Cys195 to Cys231.

This sequence belongs to the DNase I family. Ca(2+) is required as a cofactor. Mg(2+) serves as cofactor. Highest expression in pancreas.

The protein resides in the secreted. It localises to the zymogen granule. The protein localises to the nucleus envelope. The enzyme catalyses Endonucleolytic cleavage to 5'-phosphodinucleotide and 5'-phosphooligonucleotide end-products.. In terms of biological role, serum endocuclease secreted into body fluids by a wide variety of exocrine and endocrine organs. Expressed by non-hematopoietic tissues and preferentially cleaves protein-free DNA. Among other functions, seems to be involved in cell death by apoptosis. Binds specifically to G-actin and blocks actin polymerization. Together with DNASE1L3, plays a key role in degrading neutrophil extracellular traps (NETs). NETs are mainly composed of DNA fibers and are released by neutrophils to bind pathogens during inflammation. Degradation of intravascular NETs by DNASE1 and DNASE1L3 is required to prevent formation of clots that obstruct blood vessels and cause organ damage following inflammation. This is Deoxyribonuclease-1 (DNASE1) from Canis lupus familiaris (Dog).